A 128-amino-acid chain; its full sequence is MTHKNSCITLISPQNNKIKNTQGIKITSSAKKQILFLTKKNKKKIKLRLKKTGCAGFKYCMEEVVDTSTNLSEIIFYANDVSIIVNTNELHMLDGVKIDFVKEGLNYSFKFSHTKIKNFCGCGNSFEF.

Belongs to the HesB/IscA family.

This is an uncharacterized protein from Buchnera aphidicola subsp. Baizongia pistaciae (strain Bp).